A 418-amino-acid chain; its full sequence is Thermolabile hemolysin (418 aa).

A signal peptide spans 1-19 (MMKKTITLLTALLPLASAV). Ser-153 (nucleophile) is an active-site residue. Residues Asp-390 and His-393 contribute to the active site.

Belongs to the 'GDSL' lipolytic enzyme family. In terms of processing, there are two forms of LDH. The LDH(S) may be a protein in which 13 residues of the N-terminal of LDH(L) are deleted.

It is found in the secreted. Its function is as follows. Phospholipase hydrolyzing both fatty acid esters of phospholipid, i.e. it hydrolyzes phosphatidylcholine (PC) to lysophosphatidylcholine (LPC) and then LPC to glycerophosphorylcholine (GPC). This Vibrio parahaemolyticus serotype O3:K6 (strain RIMD 2210633) protein is Thermolabile hemolysin.